The following is a 133-amino-acid chain: Small ribosomal subunit protein uS19 (133 aa).

This sequence belongs to the universal ribosomal protein uS19 family. In terms of assembly, part of the 30S ribosomal subunit.

In terms of biological role, protein S19 forms a complex with S13 that binds strongly to the 16S ribosomal RNA. This Thermococcus kodakarensis (strain ATCC BAA-918 / JCM 12380 / KOD1) (Pyrococcus kodakaraensis (strain KOD1)) protein is Small ribosomal subunit protein uS19.